A 24-amino-acid chain; its full sequence is Caerulein precursor fragment BM1 (24 aa).

Expressed by the skin glands.

It is found in the secreted. Functionally, antimicrobial peptide. This Xenopus boumbaensis (Mawa clawed frog) protein is Caerulein precursor fragment BM1.